The primary structure comprises 267 residues: Diphthine--ammonia ligase (267 aa).

Tyr97 carries the phosphotyrosine modification.

The protein belongs to the Diphthine--ammonia ligase family.

It carries out the reaction diphthine-[translation elongation factor 2] + NH4(+) + ATP = diphthamide-[translation elongation factor 2] + AMP + diphosphate + H(+). It participates in protein modification; peptidyl-diphthamide biosynthesis. Amidase that may catalyze the last step of diphthamide biosynthesis using ammonium and ATP. Diphthamide biosynthesis consists in the conversion of an L-histidine residue in the translation elongation factor (EEF2) to diphthamide. The chain is Diphthine--ammonia ligase from Homo sapiens (Human).